We begin with the raw amino-acid sequence, 416 residues long: UDP-N-acetylglucosamine 1-carboxyvinyltransferase (416 aa).

Position 22 to 23 (22 to 23 (KN)) interacts with phosphoenolpyruvate. R91 serves as a coordination point for UDP-N-acetyl-alpha-D-glucosamine. Catalysis depends on C115, which acts as the Proton donor. C115 carries the post-translational modification 2-(S-cysteinyl)pyruvic acid O-phosphothioketal. Residues 120-124 (RPIDL), D303, and I325 contribute to the UDP-N-acetyl-alpha-D-glucosamine site.

Belongs to the EPSP synthase family. MurA subfamily.

Its subcellular location is the cytoplasm. The catalysed reaction is phosphoenolpyruvate + UDP-N-acetyl-alpha-D-glucosamine = UDP-N-acetyl-3-O-(1-carboxyvinyl)-alpha-D-glucosamine + phosphate. It functions in the pathway cell wall biogenesis; peptidoglycan biosynthesis. Its function is as follows. Cell wall formation. Adds enolpyruvyl to UDP-N-acetylglucosamine. The sequence is that of UDP-N-acetylglucosamine 1-carboxyvinyltransferase from Lawsonia intracellularis (strain PHE/MN1-00).